We begin with the raw amino-acid sequence, 419 residues long: L-rhamnose isomerase (419 aa).

Mn(2+) is bound by residues H262, D294, and D296.

Belongs to the rhamnose isomerase family. In terms of assembly, homotetramer. Requires Mn(2+) as cofactor.

The protein localises to the cytoplasm. It carries out the reaction L-rhamnopyranose = L-rhamnulose. It participates in carbohydrate degradation; L-rhamnose degradation; glycerone phosphate from L-rhamnose: step 1/3. Its function is as follows. Catalyzes the interconversion of L-rhamnose and L-rhamnulose. The protein is L-rhamnose isomerase of Escherichia coli O6:H1 (strain CFT073 / ATCC 700928 / UPEC).